Consider the following 490-residue polypeptide: Betaine aldehyde dehydrogenase (490 aa).

Threonine 26, isoleucine 27, and aspartate 93 together coordinate K(+). Residue 150–152 (GAW) participates in NAD(+) binding. Lysine 162 serves as the catalytic Charge relay system. NAD(+) is bound at residue 176 to 179 (KPSE). Valine 180 provides a ligand contact to K(+). An NAD(+)-binding site is contributed by 230 to 233 (GVAS). Leucine 246 is a K(+) binding site. Glutamate 252 acts as the Proton acceptor in catalysis. Residues glycine 254, cysteine 286, and glutamate 387 each contribute to the NAD(+) site. Catalysis depends on cysteine 286, which acts as the Nucleophile. Cysteine 286 is subject to Cysteine sulfenic acid (-SOH). K(+)-binding residues include lysine 457 and glycine 460. Glutamate 464 (charge relay system) is an active-site residue.

The protein belongs to the aldehyde dehydrogenase family. As to quaternary structure, dimer of dimers. It depends on K(+) as a cofactor.

It carries out the reaction betaine aldehyde + NAD(+) + H2O = glycine betaine + NADH + 2 H(+). It participates in amine and polyamine biosynthesis; betaine biosynthesis via choline pathway; betaine from betaine aldehyde: step 1/1. Involved in the biosynthesis of the osmoprotectant glycine betaine. Catalyzes the irreversible oxidation of betaine aldehyde to the corresponding acid. The chain is Betaine aldehyde dehydrogenase from Escherichia coli (strain K12 / DH10B).